The following is a 274-amino-acid chain: Large ribosomal subunit protein uL2 (274 aa).

The interval 224 to 274 is disordered; that stretch reads AMNPVDHPHGGGEGRTGEGQVPVSPWNTMTKGYRTRSNKRTQTFIVSRRKK. Residues 229-239 show a composition bias toward basic and acidic residues; it reads DHPHGGGEGRT.

The protein belongs to the universal ribosomal protein uL2 family. In terms of assembly, part of the 50S ribosomal subunit. Forms a bridge to the 30S subunit in the 70S ribosome.

Functionally, one of the primary rRNA binding proteins. Required for association of the 30S and 50S subunits to form the 70S ribosome, for tRNA binding and peptide bond formation. It has been suggested to have peptidyltransferase activity; this is somewhat controversial. Makes several contacts with the 16S rRNA in the 70S ribosome. In Methylibium petroleiphilum (strain ATCC BAA-1232 / LMG 22953 / PM1), this protein is Large ribosomal subunit protein uL2.